The chain runs to 426 residues: MLDPALLRQHPADLAERLRSTRSFDLNIAELELLESERKRIQVRTQELQSQRNSKSKAIGQAKAKGEDVAALMAEVAGFGDELKASEEALDAIRAKLEGIALGLPNLPAEDVPLGKDESENVEQSRWGTPRQFDFAVKDHVELGAPHGWLDGETAAKLSGARFTVLRGPVARLHRALAQFMLDLHVGEHGYEETNVPLLVNADSMRGTGQLPKFEDDLFQTEVGESRRYLIPTSEVPLTNIVRDEIIDAERLPLRMTAHSMCFRAEAGSGGRDTRGMIRQHQFEKVELVTACAPEDSDAEHQRMTRCAEVVLEQLGLPYRKVLLCTGDMGFSAIKTYDLEVWLPSQNTYREISSCSNCGDFQARRMQARWRNPVSGKPELLHTLNGSGTAVGRAMIAVMENYQNADGSIDVPQVLRPYMGGLERIG.

Position 233-235 (233-235) interacts with L-serine; sequence TSE. 264-266 contacts ATP; it reads RAE. E287 is a binding site for L-serine. Position 351-354 (351-354) interacts with ATP; that stretch reads EISS. Residue S387 coordinates L-serine.

The protein belongs to the class-II aminoacyl-tRNA synthetase family. Type-1 seryl-tRNA synthetase subfamily. As to quaternary structure, homodimer. The tRNA molecule binds across the dimer.

Its subcellular location is the cytoplasm. The enzyme catalyses tRNA(Ser) + L-serine + ATP = L-seryl-tRNA(Ser) + AMP + diphosphate + H(+). The catalysed reaction is tRNA(Sec) + L-serine + ATP = L-seryl-tRNA(Sec) + AMP + diphosphate + H(+). The protein operates within aminoacyl-tRNA biosynthesis; selenocysteinyl-tRNA(Sec) biosynthesis; L-seryl-tRNA(Sec) from L-serine and tRNA(Sec): step 1/1. In terms of biological role, catalyzes the attachment of serine to tRNA(Ser). Is also able to aminoacylate tRNA(Sec) with serine, to form the misacylated tRNA L-seryl-tRNA(Sec), which will be further converted into selenocysteinyl-tRNA(Sec). The sequence is that of Serine--tRNA ligase from Xanthomonas euvesicatoria pv. vesicatoria (strain 85-10) (Xanthomonas campestris pv. vesicatoria).